We begin with the raw amino-acid sequence, 314 residues long: Probable UDP-sugar transporter protein SLC35A4 (314 aa).

At 1–20 (MIAISADESPESSSPALRLR) the chain is on the cytoplasmic side. A helical membrane pass occupies residues 21–41 (WLFLLLLLVLIYGSHAPLLSL). Over 42–54 (CKTQAQIPFSASS) the chain is Lumenal. A helical membrane pass occupies residues 55 to 75 (CVLLIETSKLFISFASLLASG). Over 76 to 88 (SVSTLRISISMTT) the chain is Cytoplasmic. A helical membrane pass occupies residues 89-109 (ASPYAVPAVLYAFNNHLVVFM). Topologically, residues 110 to 145 (QAYMDPSSFQVLSNLKIASTALLYTSCLGKRLHRRQ) are lumenal. A helical membrane pass occupies residues 146 to 166 (WFAMGLLVSAGVSHSCFSYDL). Over 167-175 (EGKRETAVY) the chain is Cytoplasmic. A helical transmembrane segment spans residues 176–196 (ITSWGLLLVLVYCFVSGLAAV). Residues 197–206 (YTERVLKSQR) lie on the Lumenal side of the membrane. Residues 207–227 (LPLSMQNLFLYTFGVVVNLAS) form a helical membrane-spanning segment. Residues 228–242 (HLSGGEQKGFFEGYS) are Cytoplasmic-facing. Residues 243-263 (AVVWVIVAGQVANGLLMSVVM) traverse the membrane as a helical segment. Residues 264-267 (KHGT) are Lumenal-facing. Residues 268-290 (GITRLFVISSAMLVNAVLSWGIL) form a helical membrane-spanning segment. Over 291-314 (GVQLTGYFLFPVVLIGWAVYLYYT) the chain is Cytoplasmic.

This sequence belongs to the nucleotide-sugar transporter family. SLC35A subfamily.

The protein resides in the golgi apparatus membrane. The enzyme catalyses CDP-L-ribitol(in) + CDP(out) = CDP-L-ribitol(out) + CDP(in). Functionally, mediates the transport of CDP-ribitol. Does not exhibit CMP-sialic acid, UDP-galactose and UDP-N-acetylglucosamine transport activity. This Danio rerio (Zebrafish) protein is Probable UDP-sugar transporter protein SLC35A4.